The following is an 82-amino-acid chain: Exodeoxyribonuclease 7 small subunit (82 aa).

The protein belongs to the XseB family. As to quaternary structure, heterooligomer composed of large and small subunits.

It is found in the cytoplasm. It catalyses the reaction Exonucleolytic cleavage in either 5'- to 3'- or 3'- to 5'-direction to yield nucleoside 5'-phosphates.. Functionally, bidirectionally degrades single-stranded DNA into large acid-insoluble oligonucleotides, which are then degraded further into small acid-soluble oligonucleotides. The polypeptide is Exodeoxyribonuclease 7 small subunit (Mycobacterium marinum (strain ATCC BAA-535 / M)).